The chain runs to 304 residues: Acetylglutamate kinase (304 aa).

Substrate is bound by residues Gly-82–Gly-83, Arg-104, and Asn-197.

Belongs to the acetylglutamate kinase family. ArgB subfamily.

The protein localises to the cytoplasm. The enzyme catalyses N-acetyl-L-glutamate + ATP = N-acetyl-L-glutamyl 5-phosphate + ADP. It participates in amino-acid biosynthesis; L-arginine biosynthesis; N(2)-acetyl-L-ornithine from L-glutamate: step 2/4. Its function is as follows. Catalyzes the ATP-dependent phosphorylation of N-acetyl-L-glutamate. This is Acetylglutamate kinase from Prochlorococcus marinus (strain NATL2A).